Consider the following 219-residue polypeptide: ATP synthase subunit a (219 aa).

6 helical membrane-spanning segments follow: residues 16–36, 57–79, 96–116, 122–142, 158–178, and 184–204; these read LSNW…FWLI, LLMG…FILF, LAVT…YTWI, ALAH…MVLM, LAAN…QGTL, and TSIV…VAII.

The protein belongs to the ATPase A chain family. As to quaternary structure, F-type ATPases have 2 components, CF(1) - the catalytic core - and CF(0) - the membrane proton channel. CF(1) has five subunits: alpha(3), beta(3), gamma(1), delta(1), epsilon(1). CF(0) has three main subunits: a, b and c.

It localises to the mitochondrion inner membrane. Functionally, mitochondrial membrane ATP synthase (F(1)F(0) ATP synthase or Complex V) produces ATP from ADP in the presence of a proton gradient across the membrane which is generated by electron transport complexes of the respiratory chain. F-type ATPases consist of two structural domains, F(1) - containing the extramembraneous catalytic core and F(0) - containing the membrane proton channel, linked together by a central stalk and a peripheral stalk. During catalysis, ATP synthesis in the catalytic domain of F(1) is coupled via a rotary mechanism of the central stalk subunits to proton translocation. Key component of the proton channel; it may play a direct role in the translocation of protons across the membrane. In Artemia franciscana (Brine shrimp), this protein is ATP synthase subunit a (ATP6).